An 880-amino-acid polypeptide reads, in one-letter code: Valine--tRNA ligase (880 aa).

The 'HIGH' region motif lies at 48–58; sequence PNITGKLHLGH. The 'KMSKS' region signature appears at 527-531; sequence KMSKS. An ATP-binding site is contributed by Lys-530. Coiled-coil stretches lie at residues 717–741 and 810–880; these read KEEL…AIRN and LFDL…KSLK.

Belongs to the class-I aminoacyl-tRNA synthetase family. ValS type 1 subfamily. As to quaternary structure, monomer.

Its subcellular location is the cytoplasm. It catalyses the reaction tRNA(Val) + L-valine + ATP = L-valyl-tRNA(Val) + AMP + diphosphate. Functionally, catalyzes the attachment of valine to tRNA(Val). As ValRS can inadvertently accommodate and process structurally similar amino acids such as threonine, to avoid such errors, it has a 'posttransfer' editing activity that hydrolyzes mischarged Thr-tRNA(Val) in a tRNA-dependent manner. The sequence is that of Valine--tRNA ligase from Clostridium tetani (strain Massachusetts / E88).